The following is a 698-amino-acid chain: PWWP domain-containing DNA repair factor 3A (698 aa).

Disordered regions lie at residues 102-145 and 159-386; these read TSLS…EDDQ and CSPK…EEPP. Ser-105 carries the phosphoserine modification. Polar residues predominate over residues 129 to 139; it reads SQVSSAPSPSF. 3 positions are modified to phosphoserine: Ser-165, Ser-168, and Ser-170. The span at 200–211 shows a compositional bias: polar residues; it reads DESQNGSGSQLD. 2 stretches are compositionally biased toward basic and acidic residues: residues 212–235 and 341–350; these read HGQESTTKKRQRNSGEKPARRGKA and RAGDSDRPEE. Residues Ser-355 and Ser-356 each carry the phosphoserine modification. A compositionally biased stretch (acidic residues) spans 370–384; the sequence is EEEEEEEEEEEEEEE. Residues 399–460 form the PWWP domain; it reads VGMLVWLKYQ…KHFDCKEKHA (62 aa).

Belongs to the PWWP3A family. Interacts with TP53BP1 (via BRCT domain); the interaction is not dependent on its phosphorylation status. Binds nucleosomes. Interacts with trimethylated 'Lys-36' of histone H3 (H3K36me3) (in vitro).

It localises to the nucleus. Its function is as follows. Involved in the DNA damage response pathway by contributing to the maintenance of chromatin architecture. Recruited to the vicinity of DNA breaks by TP53BP1 and plays an accessory role to facilitate damage-induced chromatin changes and promoting chromatin relaxation. Required for efficient DNA repair and cell survival following DNA damage. The polypeptide is PWWP domain-containing DNA repair factor 3A (Rattus norvegicus (Rat)).